Here is an 847-residue protein sequence, read N- to C-terminus: B-cell receptor CD22 (847 aa).

Residues 1 to 19 (MHLLGPWLLLLVLEYLAFC) form the signal peptide. The Ig-like V-type domain occupies 20–138 (DSSKWAFEHP…MERIHLNVSE (119 aa)). Residues 20-687 (DSSKWAFEHP…YYSPETIGRR (668 aa)) lie on the Extracellular side of the membrane. Residues N67, N101, and N112 are each glycosylated (N-linked (GlcNAc...) asparagine). Position 120 (R120) interacts with N-acetylneuraminate. N-linked (GlcNAc...) asparagine glycans are attached at residues N135, N164, N231, N295, N363, N428, N445, N448, and N479. 6 Ig-like C2-type domains span residues 143–235 (PHIQ…DTVQ), 242–324 (PKLE…AEVF), 331–416 (PEPS…LDVQ), 419–500 (PKKV…VALN), 505–582 (PRDV…QTAS), and 593–676 (PRRL…STLN). C161 and C219 are joined by a disulfide. 2 cysteine pairs are disulfide-bonded: C265-C309 and C353-C396. 2 disulfides stabilise this stretch: C442/C484 and C529/C571. 2 N-linked (GlcNAc...) asparagine glycosylation sites follow: N574 and N634. A disulfide bridge connects residues C616 and C659. A helical transmembrane segment spans residues 688 to 708 (VAVGLGSCLAILILAICGLKL). The Cytoplasmic portion of the chain corresponds to 709 to 847 (QRRWKRTQSQ…ENVDYVILKH (139 aa)). Phosphoserine occurs at positions 725, 726, and 729. 2 short sequence motifs (ITIM motif) span residues 760 to 765 (ISYTTL) and 794 to 799 (VTYSVL). A Phosphotyrosine modification is found at Y762. A phosphotyrosine mark is found at Y807, Y822, and Y842. Short sequence motifs (ITIM motif) lie at residues 820–825 (IHYSEL) and 840–845 (VDYVIL).

The protein belongs to the immunoglobulin superfamily. SIGLEC (sialic acid binding Ig-like lectin) family. As to quaternary structure, predominantly monomer of isoform CD22-beta. Also found as heterodimer of isoform CD22-beta and a shorter isoform. Interacts with PTPN6/SHP-1, LYN, SYK, PIK3R1/PIK3R2 and PLCG1 upon phosphorylation. Interacts with GRB2, INPP5D and SHC1 upon phosphorylation. May form a complex with INPP5D/SHIP, GRB2 and SHC1. Phosphorylation of Tyr-762, Tyr-807 and Tyr-822 are involved in binding to SYK, GRB2 and SYK, respectively. Phosphorylation of Tyr-842 is involved in binding to SYK, PLCG2 and PIK3R1/PIK3R2. In terms of processing, phosphorylated on tyrosine residues by LYN.

It is found in the cell membrane. Most highly expressed siglec (sialic acid-binding immunoglobulin-like lectin) on B-cells that plays a role in various aspects of B-cell biology including differentiation, antigen presentation, and trafficking to bone marrow. Binds to alpha 2,6-linked sialic acid residues of surface molecules such as CD22 itself, CD45 and IgM in a cis configuration. Can also bind to ligands on other cells as an adhesion molecule in a trans configuration. Acts as an inhibitory coreceptor on the surface of B-cells and inhibits B-cell receptor induced signaling, characterized by inhibition of the calcium mobilization and cellular activation. Mechanistically, the immunoreceptor tyrosine-based inhibitory motif domain is phosphorylated by the Src kinase LYN, which in turn leads to the recruitment of the protein tyrosine phosphatase 1/PTPN6, leading to the negative regulation of BCR signaling. If this negative signaling from is of sufficient strength, apoptosis of the B-cell can be induced. In Gorilla gorilla gorilla (Western lowland gorilla), this protein is B-cell receptor CD22.